A 145-amino-acid chain; its full sequence is Large ribosomal subunit protein uL13 (145 aa).

It belongs to the universal ribosomal protein uL13 family. As to quaternary structure, part of the 50S ribosomal subunit.

In terms of biological role, this protein is one of the early assembly proteins of the 50S ribosomal subunit, although it is not seen to bind rRNA by itself. It is important during the early stages of 50S assembly. This is Large ribosomal subunit protein uL13 from Haloquadratum walsbyi (strain DSM 16790 / HBSQ001).